The sequence spans 934 residues: Serine/threonine-protein kinase KIPK1 (934 aa).

Disordered regions lie at residues leucine 20 to valine 40, arginine 70 to glycine 113, proline 189 to glutamine 227, serine 305 to glutamine 343, serine 395 to valine 438, and glutamate 466 to arginine 493. 2 stretches are compositionally biased toward polar residues: residues serine 82 to serine 94 and asparagine 212 to glutamine 227. A compositionally biased stretch (polar residues) spans serine 395–asparagine 421. Residues phenylalanine 538–phenylalanine 879 enclose the Protein kinase domain. ATP contacts are provided by residues leucine 544 to valine 552 and lysine 567. Aspartate 663 functions as the Proton acceptor in the catalytic mechanism. The interval serine 738–glutamate 773 is disordered. A compositionally biased stretch (polar residues) spans lysine 755 to leucine 764.

It belongs to the protein kinase superfamily. Ser/Thr protein kinase family. Interacts with KCBP. Interacts with PERK8, PERK9, PERK10 and PERK13. In terms of processing, autophosphorylated. Expressed in roots, cauline leaves, flowers and siliques.

Its subcellular location is the cytoplasm. The protein resides in the nucleus. The enzyme catalyses L-seryl-[protein] + ATP = O-phospho-L-seryl-[protein] + ADP + H(+). It catalyses the reaction L-threonyl-[protein] + ATP = O-phospho-L-threonyl-[protein] + ADP + H(+). In terms of biological role, could be involved in the negative regulation of root growth. The protein is Serine/threonine-protein kinase KIPK1 of Arabidopsis thaliana (Mouse-ear cress).